Consider the following 173-residue polypeptide: uncharacterized protein (173 aa).

4 helical membrane passes run 9–29 (FSIC…LLCV), 32–52 (ICSA…TFFH), 100–120 (MFLC…SFIV), and 127–147 (FLFL…GLYP).

The protein resides in the membrane. This is an uncharacterized protein from Saccharomyces cerevisiae (strain ATCC 204508 / S288c) (Baker's yeast).